Consider the following 500-residue polypeptide: NAD(P)H-quinone oxidoreductase chain 4, chloroplastic (500 aa).

A run of 14 helical transmembrane segments spans residues 4 to 24, 35 to 55, 87 to 107, 113 to 130, 134 to 154, 167 to 187, 211 to 231, 242 to 262, 272 to 292, 305 to 325, 330 to 350, 386 to 406, 416 to 436, and 462 to 482; these read FPWL…MLFL, YTIC…CYNF, IGTI…AFPV, LFHF…GSFS, LLLF…LLSM, FILY…GISL, IILY…IPLH, HYST…YGLV, AHSL…IYAA, IAYS…SITD, GAIL…FLAG, LALP…GIIT, IFII…LLSM, and LFLS…PDFV.

It belongs to the complex I subunit 4 family.

It is found in the plastid. The protein localises to the chloroplast thylakoid membrane. It carries out the reaction a plastoquinone + NADH + (n+1) H(+)(in) = a plastoquinol + NAD(+) + n H(+)(out). The enzyme catalyses a plastoquinone + NADPH + (n+1) H(+)(in) = a plastoquinol + NADP(+) + n H(+)(out). The sequence is that of NAD(P)H-quinone oxidoreductase chain 4, chloroplastic from Aethionema cordifolium (Lebanon stonecress).